The sequence spans 391 residues: 3-ketoacyl-CoA thiolase (391 aa).

Residue C95 is the Acyl-thioester intermediate of the active site. Residues H347 and C377 each act as proton acceptor in the active site.

This sequence belongs to the thiolase-like superfamily. Thiolase family. Heterotetramer of two alpha chains (FadB) and two beta chains (FadA).

It is found in the cytoplasm. The catalysed reaction is an acyl-CoA + acetyl-CoA = a 3-oxoacyl-CoA + CoA. The protein operates within lipid metabolism; fatty acid beta-oxidation. Its function is as follows. Catalyzes the final step of fatty acid oxidation in which acetyl-CoA is released and the CoA ester of a fatty acid two carbons shorter is formed. The protein is 3-ketoacyl-CoA thiolase of Pseudomonas aeruginosa (strain ATCC 15692 / DSM 22644 / CIP 104116 / JCM 14847 / LMG 12228 / 1C / PRS 101 / PAO1).